The sequence spans 264 residues: Taurine import ATP-binding protein TauB (264 aa).

The 230-residue stretch at 4–233 folds into the ABC transporter domain; sequence LQLERISAQY…RYAAGESARA (230 aa). 38-45 provides a ligand contact to ATP; that stretch reads GPSGSGKT.

This sequence belongs to the ABC transporter superfamily. Taurine importer (TC 3.A.1.17.1) family. In terms of assembly, the complex is composed of two ATP-binding proteins (TauB), two transmembrane proteins (TauC) and a solute-binding protein (TauA).

Its subcellular location is the cell inner membrane. It catalyses the reaction taurine(out) + ATP + H2O = taurine(in) + ADP + phosphate + H(+). In terms of biological role, part of the ABC transporter complex TauABC involved in taurine import. Responsible for energy coupling to the transport system. This Pseudomonas fluorescens (strain Pf0-1) protein is Taurine import ATP-binding protein TauB.